A 218-amino-acid polypeptide reads, in one-letter code: DNA endonuclease I-ChuI (218 aa).

It belongs to the LAGLIDADG endonuclease family.

It localises to the plastid. The protein localises to the chloroplast. Functionally, probable endonuclease involved in intron homing. Encoded in the group-I intron of the subunit rRNA-encoding gene (rrnL), it generates a staggered cut with 4-nt (CTCG) 3'-OH overhangs 2 bp downstream from the intron insertion site. This Chlamydomonas applanata (Chlamydomonas humicola) protein is DNA endonuclease I-ChuI.